The sequence spans 317 residues: Peptidyl-prolyl cis-trans isomerase CYP26-2, chloroplastic (317 aa).

Positions 1 to 37 are disordered; sequence MMQPNAKLLSPSAKFLPSPIEPPQHNRRTTVGAPPSL. One can recognise a PPIase cyclophilin-type domain in the interval 95 to 311; sequence FIDVSIDGEP…SKVVVTNCGL (217 aa).

The protein belongs to the cyclophilin-type PPIase family. Ubiquitous. Lower levels of expression in roots.

It is found in the plastid. The protein resides in the chloroplast thylakoid. It carries out the reaction [protein]-peptidylproline (omega=180) = [protein]-peptidylproline (omega=0). Its function is as follows. PPIases accelerate the folding of proteins. It catalyzes the cis-trans isomerization of proline imidic peptide bonds in oligopeptides. This Arabidopsis thaliana (Mouse-ear cress) protein is Peptidyl-prolyl cis-trans isomerase CYP26-2, chloroplastic (CYP26-2).